We begin with the raw amino-acid sequence, 63 residues long: Large ribosomal subunit protein uL29 (63 aa).

Belongs to the universal ribosomal protein uL29 family.

The chain is Large ribosomal subunit protein uL29 from Pectobacterium atrosepticum (strain SCRI 1043 / ATCC BAA-672) (Erwinia carotovora subsp. atroseptica).